We begin with the raw amino-acid sequence, 112 residues long: Large ribosomal subunit protein P1 (112 aa).

The span at 71 to 90 shows a compositional bias: low complexity; it reads PAQAAAAAPAGGAPAAAAPA. The segment at 71–112 is disordered; the sequence is PAQAAAAAPAGGAPAAAAPAESKEGRRSQGESDDDMGFGLLD. Residues 91–100 are compositionally biased toward basic and acidic residues; that stretch reads ESKEGRRSQG.

Belongs to the eukaryotic ribosomal protein P1/P2 family. P1 and P2 exist as dimers at the large ribosomal subunit.

In terms of biological role, plays an important role in the elongation step of protein synthesis. This Oscheius tipulae protein is Large ribosomal subunit protein P1 (rpl-21).